A 114-amino-acid chain; its full sequence is Putative cysteine proteinase inhibitor 9 (114 aa).

The signal sequence occupies residues 1 to 23 (MRTSSLVLFAAVAVFGAACTAAA).

Belongs to the cystatin family. Phytocystatin subfamily.

The protein localises to the secreted. In terms of biological role, specific inhibitor of cysteine proteinases. Probably involved in the regulation of endogenous processes and in defense against pests and pathogens. The protein is Putative cysteine proteinase inhibitor 9 of Oryza sativa subsp. japonica (Rice).